The primary structure comprises 234 residues: uncharacterized protein (234 aa).

The region spanning 5–234 (MELVDVWKIY…ERRGVVYGDT (230 aa)) is the ABC transporter domain. Residue 41–48 (GPSGSGKS) participates in ATP binding.

This sequence belongs to the ABC transporter superfamily.

This is an uncharacterized protein from Thermotoga maritima (strain ATCC 43589 / DSM 3109 / JCM 10099 / NBRC 100826 / MSB8).